The chain runs to 455 residues: Chromosomal replication initiator protein DnaA (455 aa).

Residues 1–75 (MDTNNNIEKE…EILSQNKVGM (75 aa)) are domain I, interacts with DnaA modulators. Residues 75-106 (MHLAHSVDVRIEVAPKIQISTQSNINYKATKM) form a domain II region. Residues 107–321 (SVKDSYTFEN…GAIIKISVNA (215 aa)) are domain III, AAA+ region. Residues Gly151, Gly153, Lys154, and Thr155 each contribute to the ATP site. Positions 322–455 (NLMNASIDLN…DKKTAFNSSE (134 aa)) are domain IV, binds dsDNA.

Belongs to the DnaA family. As to quaternary structure, oligomerizes as a right-handed, spiral filament on DNA at oriC.

It localises to the cytoplasm. Plays an essential role in the initiation and regulation of chromosomal replication. ATP-DnaA binds to the origin of replication (oriC) to initiate formation of the DNA replication initiation complex once per cell cycle. Binds the DnaA box (a 9 base pair repeat at the origin) and separates the double-stranded (ds)DNA. Forms a right-handed helical filament on oriC DNA; dsDNA binds to the exterior of the filament while single-stranded (ss)DNA is stabiized in the filament's interior. The ATP-DnaA-oriC complex binds and stabilizes one strand of the AT-rich DNA unwinding element (DUE), permitting loading of DNA polymerase. After initiation quickly degrades to an ADP-DnaA complex that is not apt for DNA replication. Binds acidic phospholipids. This is Chromosomal replication initiator protein DnaA from Helicobacter pylori (strain HPAG1).